Reading from the N-terminus, the 216-residue chain is Phosphoenolpyruvate guanylyltransferase (216 aa).

Residues Thr139, Gly155, and Ser158 each coordinate phosphoenolpyruvate.

The protein belongs to the CofC family.

The catalysed reaction is phosphoenolpyruvate + GTP + H(+) = enolpyruvoyl-2-diphospho-5'-guanosine + diphosphate. The protein operates within cofactor biosynthesis; coenzyme F420 biosynthesis. In terms of biological role, guanylyltransferase that catalyzes the activation of phosphoenolpyruvate (PEP) as enolpyruvoyl-2-diphospho-5'-guanosine, via the condensation of PEP with GTP. It is involved in the biosynthesis of coenzyme F420, a hydride carrier cofactor. The chain is Phosphoenolpyruvate guanylyltransferase from Streptomyces avermitilis (strain ATCC 31267 / DSM 46492 / JCM 5070 / NBRC 14893 / NCIMB 12804 / NRRL 8165 / MA-4680).